Consider the following 528-residue polypeptide: Arginine--tRNA ligase (528 aa).

The 'HIGH' region signature appears at 112–122 (ANPTGPLHIGH).

This sequence belongs to the class-I aminoacyl-tRNA synthetase family. In terms of assembly, monomer.

The protein localises to the cytoplasm. The enzyme catalyses tRNA(Arg) + L-arginine + ATP = L-arginyl-tRNA(Arg) + AMP + diphosphate. The protein is Arginine--tRNA ligase of Wolinella succinogenes (strain ATCC 29543 / DSM 1740 / CCUG 13145 / JCM 31913 / LMG 7466 / NCTC 11488 / FDC 602W) (Vibrio succinogenes).